Consider the following 73-residue polypeptide: Alpha-bungarotoxin N3 (73 aa).

5 disulfide bridges follow: Cys3–Cys23, Cys16–Cys43, Cys28–Cys32, Cys47–Cys58, and Cys59–Cys64.

The protein belongs to the three-finger toxin family. Long-chain subfamily. Type II alpha-neurotoxin sub-subfamily. Monomer in solution, homodimer in crystal state. As to expression, expressed by the venom gland.

The protein localises to the secreted. In terms of biological role, binds with high affinity to muscular (alpha-1/CHRNA1) and neuronal (alpha-7/CHRNA7) nicotinic acetylcholine receptor (nAChR) and inhibits acetylcholine from binding to the receptor, thereby impairing neuromuscular and neuronal transmission. Mice injected with this toxin develop flaccid paralysis followed by death. Irreversibly inhibits twitches in a concentration-dependent manner in rat phrenic nerve-hemidiaphragm and chick biventer cervicis muscle. This is Alpha-bungarotoxin N3 from Bungarus candidus (Malayan krait).